A 74-amino-acid chain; its full sequence is Homeobox protein Hox-B8 (74 aa).

The span at 1 to 24 shows a compositional bias: low complexity; sequence YTDCKLAASGLGEEAESSEQSPSP. Positions 1-28 are disordered; sequence YTDCKLAASGLGEEAESSEQSPSPTQLF. An Antp-type hexapeptide motif is present at residues 27 to 32; sequence LFPWMR. A DNA-binding region (homeobox) is located at residues 39 to 74; the sequence is RRRGRQTYSRYQTLELEKEFLFNPYLTRKRRIEVSR.

It belongs to the Antp homeobox family.

It localises to the nucleus. Sequence-specific transcription factor which is part of a developmental regulatory system that provides cells with specific positional identities on the anterior-posterior axis. The chain is Homeobox protein Hox-B8 (HOXB8) from Gallus gallus (Chicken).